Consider the following 331-residue polypeptide: 5,10-methylenetetrahydromethanopterin reductase (331 aa).

It belongs to the mer family.

Its subcellular location is the cytoplasm. It carries out the reaction 5-methyl-5,6,7,8-tetrahydromethanopterin + oxidized coenzyme F420-(gamma-L-Glu)(n) + H(+) = 5,10-methylenetetrahydromethanopterin + reduced coenzyme F420-(gamma-L-Glu)(n). It participates in one-carbon metabolism; methanogenesis from CO(2); methyl-coenzyme M from 5,10-methylene-5,6,7,8-tetrahydromethanopterin: step 1/2. Its function is as follows. Catalyzes the reversible reduction of methylene-H(4)MPT to methyl-H(4)MPT. The chain is 5,10-methylenetetrahydromethanopterin reductase from Methanocaldococcus jannaschii (strain ATCC 43067 / DSM 2661 / JAL-1 / JCM 10045 / NBRC 100440) (Methanococcus jannaschii).